The sequence spans 117 residues: Large ribosomal subunit protein bL19 (117 aa).

This sequence belongs to the bacterial ribosomal protein bL19 family.

In terms of biological role, this protein is located at the 30S-50S ribosomal subunit interface and may play a role in the structure and function of the aminoacyl-tRNA binding site. In Sorangium cellulosum (strain So ce56) (Polyangium cellulosum (strain So ce56)), this protein is Large ribosomal subunit protein bL19.